Reading from the N-terminus, the 112-residue chain is HTH-type transcriptional regulator YodB (112 aa).

The region spanning 6–105 (CPKMESAFSL…WADQFCEPGD (100 aa)) is the HTH hxlR-type domain.

Negatively regulates yodC and azoR1 which may contribute to the degradation of aromatic compounds. Probably positively regulates the catechol-specific transcription of mhqNOP, mhqED, and mhqA. The sequence is that of HTH-type transcriptional regulator YodB (yodB) from Bacillus subtilis (strain 168).